We begin with the raw amino-acid sequence, 90 residues long: Cell division topological specificity factor (90 aa).

The protein belongs to the MinE family.

Its function is as follows. Prevents the cell division inhibition by proteins MinC and MinD at internal division sites while permitting inhibition at polar sites. This ensures cell division at the proper site by restricting the formation of a division septum at the midpoint of the long axis of the cell. The chain is Cell division topological specificity factor from Pelotomaculum thermopropionicum (strain DSM 13744 / JCM 10971 / SI).